We begin with the raw amino-acid sequence, 976 residues long: Probable outer membrane protein PmpA (976 aa).

An N-terminal signal peptide occupies residues 1–50 (MNQVIKTIALCYQKYISRASNKTFSIHNTLSLSLLPKCLLGSLIIYTSHA). The Autotransporter domain maps to 671–976 (GNAIPNSLWS…SLSCGGYVGF (306 aa)).

It belongs to the PMP outer membrane protein family.

It localises to the secreted. Its subcellular location is the cell wall. The protein localises to the cell outer membrane. The protein is Probable outer membrane protein PmpA (pmpA) of Chlamydia muridarum (strain MoPn / Nigg).